Reading from the N-terminus, the 1353-residue chain is Tenascin-R (1353 aa).

The first 33 residues, 1–33, serve as a signal peptide directing secretion; the sequence is MGTDSENPVLRNVLISFNLLLLGAVLKPFECRL. A coiled-coil region spans residues 132-156; it reads SLQELLSRIEMLEREVSMLRDQCNS. 2 N-linked (GlcNAc...) asparagine glycosylation sites follow: Asn-179 and Asn-197. 4 EGF-like domains span residues 187–198, 234–260, 265–291, and 292–323; these read CICSEGWAGSNC, CPAGCGSRGLCVDGECICEEGFGGEDC, CPRDCSGRGHCDNGTCVCAEGYAGEDC, and GWLRCPNACSGRGVCQDGLCICEDGYGGQDCS. N-linked (GlcNAc...) asparagine glycosylation occurs at Asn-277. 2 cysteine pairs are disulfide-bonded: Cys-296–Cys-306 and Cys-313–Cys-322. 9 consecutive Fibronectin type-III domains span residues 327–419, 420–504, 505–594, 595–686, 687–776, 777–863, 864–952, 953–1037, and 1038–1126; these read PPEN…TPQG, LKFK…TLID, GPTQ…TEID, APKN…TELD, SPRD…VRPI, TQLH…TGMD, APKD…AMDA, PLGV…TLLD, and PPTN…GGRV. N-linked (GlcNAc...) asparagine glycans are attached at residues Asn-391, Asn-469, and Asn-580. Residues Asn-734, Asn-790, Asn-872, Asn-1031, Asn-1041, Asn-1256, and Asn-1342 are each glycosylated (N-linked (GlcNAc...) asparagine). The region spanning 1124-1339 is the Fibrinogen C-terminal domain; sequence GRVFANPQDC…FVEMKMRPYN (216 aa).

The protein belongs to the tenascin family. Forms homodimers and homotrimers. Interacts with CNTN1, NFASC and CSPG5. In terms of tissue distribution, brain specific.

The protein localises to the secreted. It localises to the extracellular space. Its subcellular location is the extracellular matrix. Neural extracellular matrix (ECM) protein involved in interactions with different cells and matrix components. Involved in cell attachment and neurite formation. Interaction with CNTN1 enhances the neurite outgrowth. This Gallus gallus (Chicken) protein is Tenascin-R (TNR).